Reading from the N-terminus, the 336-residue chain is Probable GTPase MT1543 (336 aa).

GTP-binding positions include 67–75, Asp-209, and 245–247; these read GVPGVGKST and SAV.

The protein belongs to the SIMIBI class G3E GTPase family. ArgK/MeaB subfamily. In terms of assembly, homodimer.

Functionally, probable GTPase. May also bind and hydrolyze ATP. May function as chaperone. This Mycobacterium tuberculosis (strain CDC 1551 / Oshkosh) protein is Probable GTPase MT1543.